The sequence spans 160 residues: MGVTKKPDLNDPVLRAKLAKGMGHNYYGEPAWPNDLLYIFPVVILGTIACNVGLAILEPSMLGEPADPFATPLEILPEWYFFPVFQILRTVPNKLLGVLLMVSVPSGLLTVPFLENVNKFQNPFRRPVATTVFLIGTVVALWLGIGATLPIDKSLTLGLF.

3 consecutive transmembrane segments (helical) span residues 36 to 56 (LLYI…GLAI), 95 to 115 (LLGV…PFLE), and 131 to 151 (TVFL…TLPI).

The protein belongs to the cytochrome b family. PetD subfamily. As to quaternary structure, the 4 large subunits of the cytochrome b6-f complex are cytochrome b6, subunit IV (17 kDa polypeptide, petD), cytochrome f and the Rieske protein, while the 4 small subunits are petG, petL, petM and petN. The complex functions as a dimer.

The protein resides in the plastid. It localises to the chloroplast thylakoid membrane. Component of the cytochrome b6-f complex, which mediates electron transfer between photosystem II (PSII) and photosystem I (PSI), cyclic electron flow around PSI, and state transitions. The chain is Cytochrome b6-f complex subunit 4 from Oenothera elata subsp. hookeri (Hooker's evening primrose).